The primary structure comprises 478 residues: Ankyrin repeat and BTB/POZ domain-containing protein 1 (478 aa).

ANK repeat units lie at residues 1 to 31 (MDTS…EVNV) and 35 to 64 (WDST…RCEA). BTB domains follow at residues 115–182 (SDVV…DIGV) and 272–346 (PDIC…ELPP). The stretch at 451 to 477 (VQTYSAIEEAQQRLRALEDLLVSIGLD) forms a coiled coil.

Its subcellular location is the cytoplasm. In terms of biological role, may act as a mediator of the PTEN growth-suppressive signaling pathway. May play a role in developmental processes. The polypeptide is Ankyrin repeat and BTB/POZ domain-containing protein 1 (Mus musculus (Mouse)).